Here is a 269-residue protein sequence, read N- to C-terminus: Formamidopyrimidine-DNA glycosylase (269 aa).

Catalysis depends on P2, which acts as the Schiff-base intermediate with DNA. E3 acts as the Proton donor in catalysis. The active-site Proton donor; for beta-elimination activity is the K57. DNA is bound by residues H90, R109, and K150. An FPG-type zinc finger spans residues 235-269 (QVYGKGGLPCPKCGTELAEVKIGQRATVYCSQCQQ). Residue R259 is the Proton donor; for delta-elimination activity of the active site.

The protein belongs to the FPG family. As to quaternary structure, monomer. It depends on Zn(2+) as a cofactor.

The enzyme catalyses Hydrolysis of DNA containing ring-opened 7-methylguanine residues, releasing 2,6-diamino-4-hydroxy-5-(N-methyl)formamidopyrimidine.. It catalyses the reaction 2'-deoxyribonucleotide-(2'-deoxyribose 5'-phosphate)-2'-deoxyribonucleotide-DNA = a 3'-end 2'-deoxyribonucleotide-(2,3-dehydro-2,3-deoxyribose 5'-phosphate)-DNA + a 5'-end 5'-phospho-2'-deoxyribonucleoside-DNA + H(+). Functionally, involved in base excision repair of DNA damaged by oxidation or by mutagenic agents. Acts as a DNA glycosylase that recognizes and removes damaged bases. Has a preference for oxidized purines, such as 7,8-dihydro-8-oxoguanine (8-oxoG). Has AP (apurinic/apyrimidinic) lyase activity and introduces nicks in the DNA strand. Cleaves the DNA backbone by beta-delta elimination to generate a single-strand break at the site of the removed base with both 3'- and 5'-phosphates. This is Formamidopyrimidine-DNA glycosylase from Photobacterium damsela subsp. piscicida (Pasteurella piscicida).